A 389-amino-acid polypeptide reads, in one-letter code: Probable family 17 glucosidase SCW10 (389 aa).

Positions 1-18 (MRFSNFLTVSALLTGALG) are cleaved as a signal peptide. A propeptide spanning residues 19–29 (APAVRHKHEKR) is cleaved from the precursor. Positions 70 to 134 (ASQATTSTLE…SSASSSISAS (65 aa)) are disordered. An N-linked (GlcNAc...) asparagine glycan is attached at Asn-279. Residue Glu-326 is the Nucleophile of the active site.

The protein belongs to the glycosyl hydrolase 17 family. Glycosylated.

It is found in the secreted. It localises to the cell wall. Functionally, glucanases possibly play a role in cell expansion during growth, in cell-cell fusion during mating, and in spore release during sporulation. This chain is Probable family 17 glucosidase SCW10 (SCW10), found in Saccharomyces cerevisiae (strain ATCC 204508 / S288c) (Baker's yeast).